Here is a 361-residue protein sequence, read N- to C-terminus: Spermatogenesis-associated protein 17 (361 aa).

IQ domains are found at residues 32–61 (ENDA…IVTI), 55–84 (LNRI…VAYY), and 91–120 (YNAM…LKEY).

It localises to the cytoplasm. The polypeptide is Spermatogenesis-associated protein 17 (SPATA17) (Homo sapiens (Human)).